Consider the following 64-residue polypeptide: U-myrmeciitoxin(01)-Mg4b (64 aa).

The signal sequence occupies residues Met-1–Gly-25.

This sequence belongs to the ant myrmeciitoxin-01 family. Homodimer; disulfide-linked. Post-translationally, contains 2 intrachain disulfide bonds (per chain) and 1 interchain disulfide bond. As to expression, expressed by the venom gland.

Its subcellular location is the secreted. Functionally, may have antimicrobial properties, like most ant linear peptides. The polypeptide is U-myrmeciitoxin(01)-Mg4b (Myrmecia gulosa (Red bulldog ant)).